The chain runs to 377 residues: Chaperone protein DnaJ (377 aa).

The 66-residue stretch at 5-70 (DFYEVLGVER…SKRAAYDQYG (66 aa)) folds into the J domain. The CR-type zinc-finger motif lies at 136–214 (GTTVTIRVPT…CHGQGRVEEQ (79 aa)). Positions 149, 152, 166, 169, 188, 191, 202, and 205 each coordinate Zn(2+). CXXCXGXG motif repeat units lie at residues 149–156 (CKTCNGSG), 166–173 (CTTCGGIG), 188–195 (CPRCHGTG), and 202–209 (CGSCHGQG).

Belongs to the DnaJ family. As to quaternary structure, homodimer. Zn(2+) serves as cofactor.

The protein resides in the cytoplasm. Its function is as follows. Participates actively in the response to hyperosmotic and heat shock by preventing the aggregation of stress-denatured proteins and by disaggregating proteins, also in an autonomous, DnaK-independent fashion. Unfolded proteins bind initially to DnaJ; upon interaction with the DnaJ-bound protein, DnaK hydrolyzes its bound ATP, resulting in the formation of a stable complex. GrpE releases ADP from DnaK; ATP binding to DnaK triggers the release of the substrate protein, thus completing the reaction cycle. Several rounds of ATP-dependent interactions between DnaJ, DnaK and GrpE are required for fully efficient folding. Also involved, together with DnaK and GrpE, in the DNA replication of plasmids through activation of initiation proteins. In Pseudomonas paraeruginosa (strain DSM 24068 / PA7) (Pseudomonas aeruginosa (strain PA7)), this protein is Chaperone protein DnaJ.